Reading from the N-terminus, the 20-residue chain is Unknown protein NF009 from 2D-PAGE (20 aa).

Residues 1-20 (ATSAAQGAALDESVRKVLKP) form a disordered region.

The chain is Unknown protein NF009 from 2D-PAGE from Naegleria fowleri (Brain eating amoeba).